Reading from the N-terminus, the 183-residue chain is Bifunctional protein PyrR (183 aa).

Residues Thr46 to Arg47, Arg87, Asp107 to Thr115, Arg140, and Val164 contribute to the substrate site. A PRPP-binding motif is present at residues Val103 to Thr115.

The protein belongs to the purine/pyrimidine phosphoribosyltransferase family. PyrR subfamily.

The catalysed reaction is UMP + diphosphate = 5-phospho-alpha-D-ribose 1-diphosphate + uracil. In terms of biological role, regulates the transcription of the pyrimidine nucleotide (pyr) operon in response to exogenous pyrimidines. Functionally, also displays a weak uracil phosphoribosyltransferase activity which is not physiologically significant. The polypeptide is Bifunctional protein PyrR (Thermosynechococcus vestitus (strain NIES-2133 / IAM M-273 / BP-1)).